The primary structure comprises 264 residues: Nicotinamide N-methyltransferase (264 aa).

A Citrulline; alternate modification is found at Arg18. Tyr20 and Tyr25 together coordinate S-adenosyl-L-methionine. Lys39 carries the post-translational modification N6-acetyllysine. The S-adenosyl-L-methionine site is built by Gly63, Tyr69, Asp85, and Asn90. Arg132 carries the post-translational modification Citrulline; alternate. Residues 142–143 and Thr163 each bind S-adenosyl-L-methionine; that span reads DV. Position 181 is a citrulline; alternate (Arg181). Nicotinamide-binding residues include Asp197 and Ser213.

The protein belongs to the class I-like SAM-binding methyltransferase superfamily. NNMT/PNMT/TEMT family. In terms of assembly, monomer. Post-translationally, deiminated by PADI1 and PADI2. Predominantly expressed in the liver. A lower expression is seen in the kidney, lung, skeletal muscle, placenta and heart. Not detected in the brain or pancreas.

It is found in the cytoplasm. The enzyme catalyses nicotinamide + S-adenosyl-L-methionine = 1-methylnicotinamide + S-adenosyl-L-homocysteine. It participates in cofactor metabolism. Its pathway is amino-acid degradation. With respect to regulation, inactivated by deimination on Arg-132. Its function is as follows. Catalyzes the N-methylation of nicotinamide using the universal methyl donor S-adenosyl-L-methionine to form N1-methylnicotinamide and S-adenosyl-L-homocysteine, a predominant nicotinamide/vitamin B3 clearance pathway. Plays a central role in regulating cellular methylation potential, by consuming S-adenosyl-L-methionine and limiting its availability for other methyltransferases. Actively mediates genome-wide epigenetic and transcriptional changes through hypomethylation of repressive chromatin marks, such as H3K27me3. In a developmental context, contributes to low levels of the repressive histone marks that characterize pluripotent embryonic stem cell pre-implantation state. Acts as a metabolic regulator primarily on white adipose tissue energy expenditure as well as hepatic gluconeogenesis and cholesterol biosynthesis. In white adipocytes, regulates polyamine flux by consuming S-adenosyl-L-methionine which provides for propylamine group in polyamine biosynthesis, whereas by consuming nicotinamide controls NAD(+) levels through the salvage pathway. Via its product N1-methylnicotinamide regulates protein acetylation in hepatocytes, by repressing the ubiquitination and increasing the stability of SIRT1 deacetylase. Can also N-methylate other pyridines structurally related to nicotinamide and play a role in xenobiotic detoxification. The sequence is that of Nicotinamide N-methyltransferase from Homo sapiens (Human).